We begin with the raw amino-acid sequence, 574 residues long: K(+)/H(+) antiporter NhaP2 (574 aa).

The next 13 helical transmembrane spans lie at 6-26, 34-54, 58-78, 87-107, 109-129, 173-193, 196-216, 219-239, 242-262, 271-291, 299-319, 335-355, and 359-379; these read INSFFLIGALLAAVSVLLSPV, ILLIFLAVGILAGEDGPGGIL, YSTAYLVSNLALAIILLDGGM, VALWPALSLATFGVAITTSIT, VMAAWLFDLHWLQGLLVGAIV, IAILANVDAELSVSFMLISFI, FGLGIFLGLGGGWLLWKLVNL, LAEGLYSILVLSGGLMIYAAS, LGGSGILSIYLVGLFLGNKPT, VLDGMTWVSQIGMFLVLGLLL, IWLPGLALAFGMILFARPLAV, WFISWVGLRGAVPIILAVFPM, and LPGAQLYFNLAFFVVLVSLLV. The RCK C-terminal domain occupies 405–486; sequence SGVEIYPSSE…LEALSNLFSQ (82 aa).

The protein belongs to the monovalent cation:proton antiporter 1 (CPA1) transporter (TC 2.A.36) family. NhaP2 subfamily.

It localises to the cell inner membrane. The catalysed reaction is K(+)(in) + H(+)(out) = K(+)(out) + H(+)(in). Functionally, k(+)/H(+) antiporter that extrudes potassium in exchange for external protons and maintains the internal concentration of potassium under toxic levels. This is K(+)/H(+) antiporter NhaP2 from Shewanella sp. (strain ANA-3).